A 365-amino-acid chain; its full sequence is Putrescine carbamoyltransferase (365 aa).

Carbamoyl phosphate contacts are provided by residues Ser-54 to Arg-58, Arg-105, and His-132. His-277 to Pro-280 serves as a coordination point for putrescine.

Belongs to the aspartate/ornithine carbamoyltransferase superfamily. PTCase family. Homotrimer.

The protein localises to the cytoplasm. It catalyses the reaction carbamoyl phosphate + putrescine = N-carbamoylputrescine + phosphate + H(+). Its pathway is amine and polyamine biosynthesis; putrescine biosynthesis via agmatine pathway; putrescine from N-carbamoylputrescine (transferase route): step 1/1. Functionally, catalyzes the phosphorolysis of N-carbamoylputrescine to form carbamoyl phosphate and putrescine. Is involved in the degradation pathway of the polyamine agmatine. The sequence is that of Putrescine carbamoyltransferase from Mycoplasma capricolum subsp. capricolum (strain California kid / ATCC 27343 / NCTC 10154).